The sequence spans 430 residues: Transcription factor E2F1 (430 aa).

Residues 62–103 (ATPQAPRPAPSAPRPALGRPPVKRRLDLETDHQYLAGSSGPF) form a cyclin A:CDK2 binding region. Residues 84-186 (KRRLDLETDH…KKSKNHIQWL (103 aa)) are interaction with BIRC2/c-IAP1. Residues 95-123 (YLAGSSGPFRGRGRHPGKGVKSPGEKSRY) are disordered. The DNA-binding element occupies 105-189 (GRGRHPGKGV…KNHIQWLGSH (85 aa)). Lys-112, Lys-115, and Lys-120 each carry N6-acetyllysine. The leucine-zipper stretch occupies residues 148–169 (LNWAAEVLKVQKRRIYDITNVL). The DEF box signature appears at 153-189 (EVLKVQKRRIYDITNVLEGIQLIAKKSKNHIQWLGSH). Lys-180 carries the post-translational modification N6-methyllysine; by SETD7. Positions 187-375 (GSHTMVGIGK…QLSPLVAADS (189 aa)) are required for interaction with TRIM28. The interval 190–279 (TMVGIGKRLE…AVDSSETFQI (90 aa)) is dimerization. Residues 294-340 (PEESADGISPGKTSCQETSSGEDRTADSGPAGPPPSPPSTSPALDPS) are disordered. Residues 324–333 (AGPPPSPPST) are compositionally biased toward pro residues. The tract at residues 361–430 (PMEEDQLSPL…DFGDLTPLDF (70 aa)) is transactivation. 2 positions are modified to phosphoserine: Ser-368 and Ser-396. The RB1 binding stretch occupies residues 402-419 (LDYHFGLEEGEGIRDLFD). Phosphothreonine is present on Thr-426.

Belongs to the E2F/DP family. Component of the DRTF1/E2F transcription factor complex. Forms heterodimers with DP family members. The E2F1 complex binds specifically hypophosphorylated RB1, the interaction represses E2F1-driven transcription. During the cell cycle, RB1 becomes phosphorylated in mid-to-late G1 phase, detaches from the DRTF1/E2F complex, rendering E2F transcriptionally active. Interacts with TRRAP, which probably mediates its interaction with histone acetyltransferase complexes, leading to transcription activation. Binds TOPBP1 and EAPP. Interacts with ARID3A. Interacts with TRIM28; the interaction inhibits E2F1 acetylation through recruiting HDAC1 and represses its transcriptional activity. Interaction with KAT2B; the interaction acetylates E2F1 enhancing its DNA-binding and transcriptional activity. Interacts with BIRC2/c-IAP1 (via BIR domains). The complex TFDP1:E2F1 interacts with CEBPA; the interaction prevents CEBPA binding to target genes promoters and represses its transcriptional activity. Interacts with RRP1B. Interacts with HCFC1. Interacts with KMT2E; the interaction is probably indirect and is mediated via HCFC1. Interacts with DCAF5 and L3MBTL3; the interaction requires methylation at Lys-180 and is necessary to target E2F1 for ubiquitination by the CRL4-DCAF5 E3 ubiquitin ligase complex. Post-translationally, phosphorylated by CDK2 and cyclin A-CDK2 in the S-phase. Phosphorylation by CHEK2 stabilizes E2F1 upon DNA damage and regulates its effect on transcription and apoptosis. Phosphorylation at Ser-396 by GSK3B promotes interaction with USP11, leading to its deubiquitination and stabilization. In terms of processing, ubiquitinated via 'Lys-63'-linked ubiquitin, leading to its degradation. Deubiquitinated by USP11 following phosphorylation by GSK3B, promoting its stability. Acetylation stimulates DNA-binding. Enhanced under stress conditions such as DNA damage and inhibited by retinoblastoma protein RB1. Regulated by KAP1/TRIM28 which recruits HDAC1 to E2F1 resulting in deacetylation. Acetylated by P/CAF/KAT2B. Post-translationally, methylation at Lys-180 by SETD7 promotes E2F1 ubiquitin-dependent proteasomal degradation.

Its subcellular location is the nucleus. Its activity is regulated as follows. BIRC2/c-IAP1 stimulates its transcriptional activity. Its function is as follows. Transcription activator that binds DNA cooperatively with DP proteins through the E2 recognition site, 5'-TTTC[CG]CGC-3' found in the promoter region of a number of genes whose products are involved in cell cycle regulation or in DNA replication. The DRTF1/E2F complex functions in the control of cell-cycle progression from G1 to S phase. E2F1 binds preferentially RB1 in a cell-cycle dependent manner. It can mediate both cell proliferation and TP53/p53-dependent apoptosis. Blocks adipocyte differentiation by binding to specific promoters repressing CEBPA binding to its target gene promoters. Directly activates transcription of PEG10. Positively regulates transcription of RRP1B. This is Transcription factor E2F1 from Mus musculus (Mouse).